We begin with the raw amino-acid sequence, 617 residues long: Chaperone protein HscA homolog (617 aa).

The protein belongs to the heat shock protein 70 family.

Chaperone involved in the maturation of iron-sulfur cluster-containing proteins. Has a low intrinsic ATPase activity which is markedly stimulated by HscB. The sequence is that of Chaperone protein HscA homolog from Vibrio campbellii (strain ATCC BAA-1116).